Reading from the N-terminus, the 450-residue chain is Bifunctional protein GlmU (450 aa).

The interval 1 to 236 (MTAHKPFSAV…AWEVSGVNNR (236 aa)) is pyrophosphorylase. Residues 12–15 (LAAG), K26, Q79, 84–85 (GT), 107–109 (YGD), G147, E162, N177, and N234 each bind UDP-N-acetyl-alpha-D-glucosamine. A Mg(2+)-binding site is contributed by D109. N234 contacts Mg(2+). The tract at residues 237–257 (AELASLESLWQNRKRQDVMKD) is linker. Positions 258 to 450 (GASLIAPETV…KKFRQRKKKK (193 aa)) are N-acetyltransferase. UDP-N-acetyl-alpha-D-glucosamine contacts are provided by R323 and K341. The active-site Proton acceptor is the H353. The UDP-N-acetyl-alpha-D-glucosamine site is built by Y356 and N367. Acetyl-CoA-binding positions include 376–377 (NY), S395, A413, and R430.

It in the N-terminal section; belongs to the N-acetylglucosamine-1-phosphate uridyltransferase family. In the C-terminal section; belongs to the transferase hexapeptide repeat family. As to quaternary structure, homotrimer. Requires Mg(2+) as cofactor.

It localises to the cytoplasm. The enzyme catalyses alpha-D-glucosamine 1-phosphate + acetyl-CoA = N-acetyl-alpha-D-glucosamine 1-phosphate + CoA + H(+). It carries out the reaction N-acetyl-alpha-D-glucosamine 1-phosphate + UTP + H(+) = UDP-N-acetyl-alpha-D-glucosamine + diphosphate. The protein operates within nucleotide-sugar biosynthesis; UDP-N-acetyl-alpha-D-glucosamine biosynthesis; N-acetyl-alpha-D-glucosamine 1-phosphate from alpha-D-glucosamine 6-phosphate (route II): step 2/2. It participates in nucleotide-sugar biosynthesis; UDP-N-acetyl-alpha-D-glucosamine biosynthesis; UDP-N-acetyl-alpha-D-glucosamine from N-acetyl-alpha-D-glucosamine 1-phosphate: step 1/1. Its pathway is bacterial outer membrane biogenesis; LPS lipid A biosynthesis. Catalyzes the last two sequential reactions in the de novo biosynthetic pathway for UDP-N-acetylglucosamine (UDP-GlcNAc). The C-terminal domain catalyzes the transfer of acetyl group from acetyl coenzyme A to glucosamine-1-phosphate (GlcN-1-P) to produce N-acetylglucosamine-1-phosphate (GlcNAc-1-P), which is converted into UDP-GlcNAc by the transfer of uridine 5-monophosphate (from uridine 5-triphosphate), a reaction catalyzed by the N-terminal domain. This Zymomonas mobilis subsp. mobilis (strain ATCC 31821 / ZM4 / CP4) protein is Bifunctional protein GlmU.